A 1027-amino-acid chain; its full sequence is Contactin-5 (1027 aa).

Positions 1-19 are cleaved as a signal peptide; sequence MMWLSWKLFLFLSLIGCLS. Ig-like C2-type domains lie at 32–117, 123–209, 227–307, 317–401, 407–494, and 498–593; these read PDDV…AVLQ, NFSG…RVLS, PKIE…RNVF, PQWV…AELK, PTFP…ASVS, and PTRI…TELL. Cys50 and Cys100 form a disulfide bridge. Asn65 and Asn123 each carry an N-linked (GlcNAc...) asparagine glycan. 2 cysteine pairs are disulfide-bonded: Cys144/Cys196 and Cys249/Cys296. Asn324, Asn376, and Asn467 each carry an N-linked (GlcNAc...) asparagine glycan. Intrachain disulfides connect Cys338–Cys385, Cys430–Cys478, and Cys520–Cys577. 4 consecutive Fibronectin type-III domains span residues 600–698, 703–800, 805–899, and 901–994; these read PPGV…TNEA, PPAN…SAEG, APID…TKKS, and PSQA…SYAG. N-linked (GlcNAc...) asparagine glycans are attached at residues Asn706, Asn743, Asn858, and Asn929. A lipid anchor (GPI-anchor amidated serine) is attached at Ser999. A propeptide spans 1000–1027 (removed in mature form); the sequence is AQSTLHMFSTSSSSVTLLLVLMVPSTSW.

Belongs to the immunoglobulin superfamily. Contactin family. In terms of assembly, interacts with INgCAM/L1 and the tenascin-R TNP protein. Does not interacts with NrCAM. In terms of tissue distribution, expressed by subpopulations of Purkinje cells in the cerebellum. Also expressed by one type of Purkinje cell afferents, the climbing fibers.

It is found in the cell membrane. Functionally, contactins mediate cell surface interactions during nervous system development. May contribute to the formation of somatotopic maps of cerebellar afferents during the development of the nervous system. The polypeptide is Contactin-5 (CNTN5) (Gallus gallus (Chicken)).